We begin with the raw amino-acid sequence, 321 residues long: Ribosomal protein L11 methyltransferase (321 aa).

S-adenosyl-L-methionine is bound by residues Thr150, Gly171, Asp193, and Asn256.

It belongs to the methyltransferase superfamily. PrmA family.

The protein localises to the cytoplasm. It carries out the reaction L-lysyl-[protein] + 3 S-adenosyl-L-methionine = N(6),N(6),N(6)-trimethyl-L-lysyl-[protein] + 3 S-adenosyl-L-homocysteine + 3 H(+). Functionally, methylates ribosomal protein L11. This is Ribosomal protein L11 methyltransferase from Herpetosiphon aurantiacus (strain ATCC 23779 / DSM 785 / 114-95).